The primary structure comprises 79 residues: Exodeoxyribonuclease 7 small subunit (79 aa).

This sequence belongs to the XseB family. Heterooligomer composed of large and small subunits.

The protein resides in the cytoplasm. The catalysed reaction is Exonucleolytic cleavage in either 5'- to 3'- or 3'- to 5'-direction to yield nucleoside 5'-phosphates.. In terms of biological role, bidirectionally degrades single-stranded DNA into large acid-insoluble oligonucleotides, which are then degraded further into small acid-soluble oligonucleotides. In Lactococcus lactis subsp. lactis (strain IL1403) (Streptococcus lactis), this protein is Exodeoxyribonuclease 7 small subunit.